The primary structure comprises 145 residues: CBS domain-containing protein DDB_G0289609 (145 aa).

2 consecutive CBS domains span residues 9–66 (MSKS…FLPE) and 84–141 (MKQN…LEPV).

This Dictyostelium discoideum (Social amoeba) protein is CBS domain-containing protein DDB_G0289609.